The chain runs to 161 residues: Large ribosomal subunit protein uL15 (161 aa).

Positions 1-43 (MKLSEISDNPGARKKRMRIGRGIGSGKGKTGGRGGKGQTARSG) are disordered. The span at 21-37 (RGIGSGKGKTGGRGGKG) shows a compositional bias: gly residues.

This sequence belongs to the universal ribosomal protein uL15 family. As to quaternary structure, part of the 50S ribosomal subunit.

Binds to the 23S rRNA. The polypeptide is Large ribosomal subunit protein uL15 (Rhodopseudomonas palustris (strain HaA2)).